A 92-amino-acid chain; its full sequence is Translation initiation factor IF-1 (92 aa).

In terms of domain architecture, S1-like spans 1–72 (MAKEELIQFE…EKGRLIFRHK (72 aa)). The tract at residues 69-92 (FRHKDERPGGPPRSGPPRGQFRRR) is disordered.

Belongs to the IF-1 family. In terms of assembly, component of the 30S ribosomal translation pre-initiation complex which assembles on the 30S ribosome in the order IF-2 and IF-3, IF-1 and N-formylmethionyl-tRNA(fMet); mRNA recruitment can occur at any time during PIC assembly.

It is found in the cytoplasm. Its function is as follows. One of the essential components for the initiation of protein synthesis. Stabilizes the binding of IF-2 and IF-3 on the 30S subunit to which N-formylmethionyl-tRNA(fMet) subsequently binds. Helps modulate mRNA selection, yielding the 30S pre-initiation complex (PIC). Upon addition of the 50S ribosomal subunit IF-1, IF-2 and IF-3 are released leaving the mature 70S translation initiation complex. This is Translation initiation factor IF-1 from Rhodopseudomonas palustris (strain ATCC BAA-98 / CGA009).